The following is an 837-amino-acid chain: MAGLLKKIFESGKKDVKYLERKADEIIALADETAALSDDALREKTVEFKERVQKGETLDDLLVEAFAVAREGAKRALGLYPFKVQLMGGIVLHEGNIAEMKTGEGKTLTATLPVYLNALSGEGVHVVTVNEYLAHRDAEEMGVLYNFLGLSVGLNLNALSSTEKREAYACDITYSTNNELGFDYLRDNMVVYKEEMVQRPLAFAVIDEVDSILVDEARTPLIISGEAEKSTILYVRANTFVRTLTEEEDYTVDIKTKSVQLTEDGMTKGENYFDVENLFDLENTVILHHIAQALKANYTMSLDVDYVVQDDEVLIVDQFTGRIMKGRRFSEGLHQALEAKEGVTIQNESKTMATITFQNYFRMYKKLAGMTGTAKTEEEEFRDIYNMRVIEIPTNKVIIRDDRPDLIYTTIEAKFNAVVEDIAERHAKGQPVLVGTVAIETSELISSKLKRKGIKHDVLNAKQHEREADIIKHAGERGAVVIATNMAGRGTDIKLGEGTIEAGGLAVIGTERHESRRIDNQLRGRSGRQGDPGVTQFYLSMEDELMRRFGSDNMKSMMERFGMAEDAIQSKMVSRAVESAQRRVEGNNFDSRKQVLQYDDVLRQQREVIYKQRYEVINAENSLREIIEQMIQRTVNFIVSSNASSHEPEEAWNLQGIIDYVDANLLPEGTITLEDLQNRTSEDIQNLILDKIKAAYDEKETLLPPEEFNEFEKVVLLRVVDTKWVDHIDAMDHLRDGIHLRAYGQIDPLREYQSEGFEMFEAMVSSIDEDVARYIMKAEIRQNLEREQVAKGEAINPAEGKPEAKRQPIRKDQHIGRNDPCPCGSGKKYKNCHGKEA.

ATP contacts are provided by residues Gln85, 103–107 (GEGKT), and Asp492. The disordered stretch occupies residues 791–837 (KGEAINPAEGKPEAKRQPIRKDQHIGRNDPCPCGSGKKYKNCHGKEA). Residues 800–817 (GKPEAKRQPIRKDQHIGR) show a composition bias toward basic and acidic residues. Zn(2+) is bound by residues Cys821, Cys823, Cys832, and His833. Residues 827-837 (KKYKNCHGKEA) show a composition bias toward basic residues.

It belongs to the SecA family. In terms of assembly, monomer and homodimer. Part of the essential Sec protein translocation apparatus which comprises SecA, SecYEG and auxiliary proteins SecDF. Other proteins may also be involved. The cofactor is Zn(2+).

The protein localises to the cell membrane. Its subcellular location is the cytoplasm. The catalysed reaction is ATP + H2O + cellular proteinSide 1 = ADP + phosphate + cellular proteinSide 2.. Part of the Sec protein translocase complex. Interacts with the SecYEG preprotein conducting channel. Has a central role in coupling the hydrolysis of ATP to the transfer of proteins into and across the cell membrane, serving as an ATP-driven molecular motor driving the stepwise translocation of polypeptide chains across the membrane. The protein is Protein translocase subunit SecA 1 of Listeria monocytogenes serovar 1/2a (strain ATCC BAA-679 / EGD-e).